The chain runs to 160 residues: Large ribosomal subunit protein uL11 (160 aa).

Belongs to the universal ribosomal protein uL11 family. Part of the ribosomal stalk of the 50S ribosomal subunit. Interacts with L10 and the large rRNA to form the base of the stalk. L10 forms an elongated spine to which L12 dimers bind in a sequential fashion forming a multimeric L10(L12)X complex.

In terms of biological role, forms part of the ribosomal stalk which helps the ribosome interact with GTP-bound translation factors. In Nanoarchaeum equitans (strain Kin4-M), this protein is Large ribosomal subunit protein uL11.